The following is a 603-amino-acid chain: MALRTGGPALVVLLAFWVALGPCHLQGTDPGASADAEGPQCPVACTCSHDDYTDELSVFCSSKNLTHLPDDIPVSTRALWLDGNNLSSIPSAAFQNLSSLDFLNLQGSWLRSLEPQALLGLQNLYYLHLERNRLRNLAVGLFTHTPSLASLSLSSNLLGRLEEGLFQGLSHLWDLNLGWNSLVVLPDTVFQGLGNLHELVLAGNKLTYLQPALFCGLGELRELDLSRNALRSVKANVFVHLPRLQKLYLDRNLITAVAPGAFLGMKALRWLDLSHNRVAGLMEDTFPGLLGLHVLRLAHNAIASLRPRTFKDLHFLEELQLGHNRIRQLGERTFEGLGQLEVLTLNDNQITEVRVGAFSGLFNVAVMNLSGNCLRSLPERVFQGLDKLHSLHLEHSCLGHVRLHTFAGLSGLRRLFLRDNSISSIEEQSLAGLSELLELDLTTNRLTHLPRQLFQGLGHLEYLLLSYNQLTTLSAEVLGPLQRAFWLDISHNHLETLAEGLFSSLGRVRYLSLRNNSLQTFSPQPGLERLWLDANPWDCSCPLKALRDFALQNPGVVPRFVQTVCEGDDCQPVYTYNNITCAGPANVSGLDLRDVSETHFVHC.

An N-terminal signal peptide occupies residues 1–23 (MALRTGGPALVVLLAFWVALGPC). Residues 32-74 (ASADAEGPQCPVACTCSHDDYTDELSVFCSSKNLTHLPDDIPV) form the LRRNT domain. 2 cysteine pairs are disulfide-bonded: Cys-41–Cys-47 and Cys-45–Cys-60. Residues Asn-64, Asn-85, and Asn-96 are each glycosylated (N-linked (GlcNAc...) asparagine). 19 LRR repeats span residues 75–96 (STRA…AFQN), 99–120 (SLDF…ALLG), 123–144 (NLYY…LFTH), 147–168 (SLAS…LFQG), 171–192 (HLWD…VFQG), 195–216 (NLHE…LFCG), 219–240 (ELRE…VFVH), 243–264 (RLQK…AFLG), 267–288 (ALRW…TFPG), 291–312 (GLHV…TFKD), 315–336 (FLEE…TFEG), 339–360 (QLEV…AFSG), 363–384 (NVAV…VFQG), 387–408 (KLHS…TFAG), 411–432 (GLRR…SLAG), 435–456 (ELLE…LFQG), 459–480 (HLEY…VLGP), 483–504 (RAFW…LFSS), and 507–528 (RVRY…PGLE). Asn-368 carries N-linked (GlcNAc...) asparagine glycosylation. Asn-515 is a glycosylation site (N-linked (GlcNAc...) asparagine). The LRRCT domain maps to 535-603 (NPWDCSCPLK…DVSETHFVHC (69 aa)). 3 cysteine pairs are disulfide-bonded: Cys-539/Cys-581, Cys-541/Cys-603, and Cys-565/Cys-570. Asn-578 and Asn-586 each carry an N-linked (GlcNAc...) asparagine glycan.

Forms a ternary complex with IGF1 and IGFBP3. In terms of tissue distribution, brain, kidney, lung, heart, spleen, muscle and liver.

The protein localises to the secreted. It is found in the extracellular space. May have an important role in regulating the access of circulating IGFs to the tissues. The polypeptide is Insulin-like growth factor-binding protein complex acid labile subunit (Igfals) (Rattus norvegicus (Rat)).